The following is a 305-amino-acid chain: Sulfate adenylyltransferase subunit 2 (305 aa).

It belongs to the PAPS reductase family. CysD subfamily. Heterodimer composed of CysD, the smaller subunit, and CysN.

It carries out the reaction sulfate + ATP + H(+) = adenosine 5'-phosphosulfate + diphosphate. It functions in the pathway sulfur metabolism; hydrogen sulfide biosynthesis; sulfite from sulfate: step 1/3. In terms of biological role, with CysN forms the ATP sulfurylase (ATPS) that catalyzes the adenylation of sulfate producing adenosine 5'-phosphosulfate (APS) and diphosphate, the first enzymatic step in sulfur assimilation pathway. APS synthesis involves the formation of a high-energy phosphoric-sulfuric acid anhydride bond driven by GTP hydrolysis by CysN coupled to ATP hydrolysis by CysD. The protein is Sulfate adenylyltransferase subunit 2 of Azotobacter vinelandii (strain DJ / ATCC BAA-1303).